Consider the following 369-residue polypeptide: uncharacterized protein (369 aa).

This is an uncharacterized protein from Haloarcula marismortui (strain ATCC 43049 / DSM 3752 / JCM 8966 / VKM B-1809) (Halobacterium marismortui).